We begin with the raw amino-acid sequence, 42 residues long: Cytochrome b559 subunit beta (42 aa).

Residues 17-33 (WLTIHALAVPTVFFLGA) form a helical membrane-spanning segment. His21 provides a ligand contact to heme.

It belongs to the PsbE/PsbF family. In terms of assembly, heterodimer of an alpha subunit and a beta subunit. PSII is composed of 1 copy each of membrane proteins PsbA, PsbB, PsbC, PsbD, PsbE, PsbF, PsbH, PsbI, PsbJ, PsbK, PsbL, PsbM, PsbT, PsbX, PsbY, PsbZ, Psb30/Ycf12, at least 3 peripheral proteins of the oxygen-evolving complex and a large number of cofactors. It forms dimeric complexes. Heme b is required as a cofactor.

The protein localises to the plastid. Its subcellular location is the chloroplast thylakoid membrane. Its function is as follows. This b-type cytochrome is tightly associated with the reaction center of photosystem II (PSII). PSII is a light-driven water:plastoquinone oxidoreductase that uses light energy to abstract electrons from H(2)O, generating O(2) and a proton gradient subsequently used for ATP formation. It consists of a core antenna complex that captures photons, and an electron transfer chain that converts photonic excitation into a charge separation. The chain is Cytochrome b559 subunit beta from Emiliania huxleyi (Coccolithophore).